Reading from the N-terminus, the 195-residue chain is Molybdenum cofactor guanylyltransferase (195 aa).

GTP is bound by residues 12 to 14 (LAG), K25, N53, D70, and D100. D100 is a Mg(2+) binding site.

Belongs to the MobA family. As to quaternary structure, monomer. Requires Mg(2+) as cofactor.

Its subcellular location is the cytoplasm. It catalyses the reaction Mo-molybdopterin + GTP + H(+) = Mo-molybdopterin guanine dinucleotide + diphosphate. Transfers a GMP moiety from GTP to Mo-molybdopterin (Mo-MPT) cofactor (Moco or molybdenum cofactor) to form Mo-molybdopterin guanine dinucleotide (Mo-MGD) cofactor. In Vibrio campbellii (strain ATCC BAA-1116), this protein is Molybdenum cofactor guanylyltransferase.